We begin with the raw amino-acid sequence, 205 residues long: Methylthioribulose-1-phosphate dehydratase (205 aa).

Positions 94 and 96 each coordinate Zn(2+).

Belongs to the aldolase class II family. MtnB subfamily. Requires Zn(2+) as cofactor.

The catalysed reaction is 5-(methylsulfanyl)-D-ribulose 1-phosphate = 5-methylsulfanyl-2,3-dioxopentyl phosphate + H2O. It participates in amino-acid biosynthesis; L-methionine biosynthesis via salvage pathway; L-methionine from S-methyl-5-thio-alpha-D-ribose 1-phosphate: step 2/6. Catalyzes the dehydration of methylthioribulose-1-phosphate (MTRu-1-P) into 2,3-diketo-5-methylthiopentyl-1-phosphate (DK-MTP-1-P). This chain is Methylthioribulose-1-phosphate dehydratase, found in Pectobacterium carotovorum subsp. carotovorum (strain PC1).